A 254-amino-acid polypeptide reads, in one-letter code: 3-deoxy-manno-octulosonate cytidylyltransferase (254 aa).

This sequence belongs to the KdsB family.

The protein localises to the cytoplasm. It catalyses the reaction 3-deoxy-alpha-D-manno-oct-2-ulosonate + CTP = CMP-3-deoxy-beta-D-manno-octulosonate + diphosphate. The protein operates within nucleotide-sugar biosynthesis; CMP-3-deoxy-D-manno-octulosonate biosynthesis; CMP-3-deoxy-D-manno-octulosonate from 3-deoxy-D-manno-octulosonate and CTP: step 1/1. It functions in the pathway bacterial outer membrane biogenesis; lipopolysaccharide biosynthesis. Its function is as follows. Activates KDO (a required 8-carbon sugar) for incorporation into bacterial lipopolysaccharide in Gram-negative bacteria. The protein is 3-deoxy-manno-octulosonate cytidylyltransferase of Pseudomonas aeruginosa (strain LESB58).